The sequence spans 298 residues: Glycine--tRNA ligase alpha subunit (298 aa).

The protein belongs to the class-II aminoacyl-tRNA synthetase family. As to quaternary structure, tetramer of two alpha and two beta subunits.

It localises to the cytoplasm. It carries out the reaction tRNA(Gly) + glycine + ATP = glycyl-tRNA(Gly) + AMP + diphosphate. This chain is Glycine--tRNA ligase alpha subunit (glyQ), found in Helicobacter pylori (strain J99 / ATCC 700824) (Campylobacter pylori J99).